Reading from the N-terminus, the 266-residue chain is MLKRIKVGSDLNKKESLLDAFVKTYLQTLEPISSKRLKELANLKVSCATIRNYFQILSKEGMLHQAHSSGARLPTFKAFENYWHKSLRFEVLKVNEKRLKSASENFGLFTLLKKPSLERLERVIECEKRFLILDFLAFSCAVGYSVKMEKFLLELVGRSVKEVRLIAASVNALSLARQLERLEYSSAQITRFNLMGLKTLLNSPLFFDILEGKVLERFKKGLHFIEPDCMLVTRPIEFQNERMQLLCVGKLECDYEGFFQTISKEE.

The protein belongs to the HrcA family.

Its function is as follows. Negative regulator of class I heat shock genes (grpE-dnaK-dnaJ and groELS operons). Prevents heat-shock induction of these operons. In Helicobacter pylori (strain J99 / ATCC 700824) (Campylobacter pylori J99), this protein is Heat-inducible transcription repressor HrcA.